A 359-amino-acid polypeptide reads, in one-letter code: Type-1 angiotensin II receptor (359 aa).

Residues Met-1–Asn-25 lie on the Extracellular side of the membrane. An N-linked (GlcNAc...) asparagine glycan is attached at Asn-4. Residues Gln-15 and Asp-17 each coordinate angiotensin II. 2 cysteine pairs are disulfide-bonded: Cys-18–Cys-274 and Cys-101–Cys-180. A helical transmembrane segment spans residues Tyr-26–Phe-55. Residues Tyr-56–Thr-61 are Cytoplasmic-facing. The helical transmembrane segment at Val-62–Ala-89 threads the bilayer. Topologically, residues Met-90–Asn-98 are extracellular. A helical membrane pass occupies residues Tyr-99–Asp-125. Over Arg-126–Thr-141 the chain is Cytoplasmic. A helical transmembrane segment spans residues Met-142 to Ile-165. At His-166 to Thr-190 the chain is on the extracellular side. Residue Arg-167 participates in angiotensin II binding. Asn-176 carries N-linked (GlcNAc...) asparagine glycosylation. Phe-182, His-183, and Tyr-184 together coordinate angiotensin II. N-linked (GlcNAc...) asparagine glycosylation occurs at Asn-188. Residues Leu-191–Thr-216 traverse the membrane as a helical segment. Lys-199 serves as a coordination point for angiotensin II. Topologically, residues Leu-217 to Phe-239 are cytoplasmic. Residues Lys-240–Leu-268 traverse the membrane as a helical segment. At Gly-269–Asp-278 the chain is on the extracellular side. A helical membrane pass occupies residues Ile-279–Phe-304. The Cytoplasmic segment spans residues Leu-305 to Glu-359. Residues Thr-336–Lys-350 show a composition bias toward polar residues. The interval Thr-336–Glu-359 is disordered. Cys-355 carries the S-palmitoyl cysteine lipid modification.

Belongs to the G-protein coupled receptor 1 family. Interacts with MAS1. Interacts with ARRB1. Interacts with FLNA (via filamin repeat 21); increases PKA-mediated phosphorylation of FLNA. Post-translationally, C-terminal Ser or Thr residues may be phosphorylated. In terms of tissue distribution, adrenal medulla, cortex and kidney.

The protein localises to the cell membrane. Receptor for angiotensin II, a vasoconstricting peptide, which acts as a key regulator of blood pressure and sodium retention by the kidney. The activated receptor in turn couples to G-alpha proteins G(q) (GNAQ, GNA11, GNA14 or GNA15) and thus activates phospholipase C and increases the cytosolic Ca(2+) concentrations, which in turn triggers cellular responses such as stimulation of protein kinase C. The chain is Type-1 angiotensin II receptor (AGTR1) from Bos taurus (Bovine).